The sequence spans 211 residues: MQTSTNYPRLGIMGGTFDPIHHGHLVAASEVADLFSLDRVLFVPTGQPWQKKNRTVTPAEDRYLMTTIATASNPRFSVSRVDIDRGGPTYTVDTLHDLHERYPHAELFFITGADAVARMATWRDCTEMMSLATFVAVTRPGYSLEKTELGPLGDSVTMVEVPAMAISSTNIRARARANRPIWYLVPDGVVQYIAKEKLYLPSGQVGASSMW.

It belongs to the NadD family.

The catalysed reaction is nicotinate beta-D-ribonucleotide + ATP + H(+) = deamido-NAD(+) + diphosphate. The protein operates within cofactor biosynthesis; NAD(+) biosynthesis; deamido-NAD(+) from nicotinate D-ribonucleotide: step 1/1. Functionally, catalyzes the reversible adenylation of nicotinate mononucleotide (NaMN) to nicotinic acid adenine dinucleotide (NaAD). In Corynebacterium kroppenstedtii (strain DSM 44385 / JCM 11950 / CIP 105744 / CCUG 35717), this protein is Probable nicotinate-nucleotide adenylyltransferase.